The sequence spans 39 residues: Large ribosomal subunit protein bL36 (39 aa).

The protein belongs to the bacterial ribosomal protein bL36 family.

The sequence is that of Large ribosomal subunit protein bL36 from Oenococcus oeni (strain ATCC BAA-331 / PSU-1).